A 284-amino-acid chain; its full sequence is MEMO1 family protein MmarC5_0191 (284 aa).

It belongs to the MEMO1 family.

This Methanococcus maripaludis (strain C5 / ATCC BAA-1333) protein is MEMO1 family protein MmarC5_0191.